Reading from the N-terminus, the 224-residue chain is Cytidylate kinase (224 aa).

11–19 is a binding site for ATP; that stretch reads GPAAAGKST.

It belongs to the cytidylate kinase family. Type 1 subfamily.

Its subcellular location is the cytoplasm. The enzyme catalyses CMP + ATP = CDP + ADP. The catalysed reaction is dCMP + ATP = dCDP + ADP. This Geobacillus sp. (strain WCH70) protein is Cytidylate kinase.